The sequence spans 462 residues: Juvenile hormone epoxide hydrolase (462 aa).

The helical transmembrane segment at 4-24 (ILSSFVAGVAIGSGLVITYVL) threads the bilayer. The active-site Nucleophile is Asp227. Tyr372 acts as the Proton donor in catalysis. His428 (proton acceptor) is an active-site residue.

This sequence belongs to the peptidase S33 family.

The protein localises to the microsome membrane. It localises to the endoplasmic reticulum membrane. It catalyses the reaction cis-stilbene oxide + H2O = (1R,2R)-hydrobenzoin. It carries out the reaction 1-(4-methoxyphenyl)-N-methyl-N-[(3-methyloxetan-3-yl)methyl]methanamine + H2O = 2-{[(4-methoxybenzyl)(methyl)amino]methyl}-2-methylpropane-1,3-diol. Functionally, catalyzes juvenile hormone hydrolysis. The sequence is that of Juvenile hormone epoxide hydrolase from Manduca sexta (Tobacco hawkmoth).